The following is a 270-amino-acid chain: Molybdenum storage protein subunit beta (270 aa).

As to quaternary structure, octamer consisting of 4 alpha and 4 beta chains.

It localises to the cytoplasm. Its function is as follows. Intracellular storage of molybdenum. Binds polyoxomolybdates. Can bind at least 90 molybdenum atoms per protein molecule. This chain is Molybdenum storage protein subunit beta, found in Azotobacter vinelandii (strain DJ / ATCC BAA-1303).